Reading from the N-terminus, the 238-residue chain is COMM domain-containing protein 10 homolog Vlet (238 aa).

Residues 43–77 (ASASATSSTVGTSVTTTGRVDSSTEENPTSNTEPE) are compositionally biased toward low complexity. The disordered stretch occupies residues 43–78 (ASASATSSTVGTSVTTTGRVDSSTEENPTSNTEPEY). The 65-residue stretch at 161–225 (VIEDVAWKLN…SIQGELDAML (65 aa)) folds into the COMM domain.

The protein belongs to the COMM domain-containing protein 10 family. In terms of assembly, component of the commander complex consisting of the CCC subcomplex and the retriever subcomplex. Component of the CCC subcomplex. Interacts with Smn; along with Sbat and Hez may form an accessory subcomplex involved in SMN complex function.

Scaffold protein in the commander complex that is essential for endosomal recycling of transmembrane cargos; the commander complex is composed of the CCC subcomplex and the retriever subcomplex. May modulate activity of cullin-RING E3 ubiquitin ligase (CRL) complexes. May down-regulate activation of NF-kappa-B. May have an accessory function in the survival motor neuron (SMN) complex. Required for neuromuscular function and organismal viability. This chain is COMM domain-containing protein 10 homolog Vlet, found in Drosophila melanogaster (Fruit fly).